A 122-amino-acid polypeptide reads, in one-letter code: Double-headed protease inhibitor, submandibular gland (122 aa).

Kazal-like domains lie at 10–70 (GGRK…NCDI) and 71–121 (ECTQ…QCES). Cystine bridges form between cysteine 16-cysteine 50, cysteine 28-cysteine 47, cysteine 36-cysteine 68, cysteine 72-cysteine 101, cysteine 79-cysteine 98, and cysteine 87-cysteine 119.

It is found in the secreted. This inhibitor is composed of two homologous actively inhibiting halves: one which inhibits trypsin, the other which inhibits elastase. In Meles meles (Eurasian badger), this protein is Double-headed protease inhibitor, submandibular gland.